The chain runs to 512 residues: Zinc metalloprotease mde10 (512 aa).

The signal sequence occupies residues 1–15 (MRLVLLFSCVLAVSS). Asparagine 35 carries an N-linked (GlcNAc...) asparagine glycan. Positions 65 to 306 (QTLWIGVVAD…KYVSLSCLSK (242 aa)) constitute a Peptidase M12B domain. Histidine 229 provides a ligand contact to Zn(2+). The active site involves glutamate 230. Positions 233 and 239 each coordinate Zn(2+). Intrachain disulfides connect cysteine 246-cysteine 254 and cysteine 374-cysteine 394. The region spanning 315–402 (LGTCGNGIVE…KCPVDENWDD (88 aa)) is the Disintegrin domain. A glycan (N-linked (GlcNAc...) asparagine) is linked at asparagine 432.

It depends on Zn(2+) as a cofactor. In terms of processing, glycosylated.

The protein localises to the endoplasmic reticulum. It localises to the spore wall. Has a role in the development of the spore envelope. This is Zinc metalloprotease mde10 (mde10) from Schizosaccharomyces pombe (strain 972 / ATCC 24843) (Fission yeast).